A 285-amino-acid chain; its full sequence is Transmembrane protein 53-A (285 aa).

A helical membrane pass occupies residues 165-185; sequence FLALAAFAILVIILRILLYPL.

The protein belongs to the TMEM53 family.

It is found in the nucleus outer membrane. Its function is as follows. Ensures normal bone formation, through the negative regulation of bone morphogenetic protein (BMP) signaling in osteoblast lineage cells by blocking cytoplasm-nucleus translocation of phosphorylated SMAD proteins. This is Transmembrane protein 53-A (tmem53-a) from Xenopus laevis (African clawed frog).